Consider the following 384-residue polypeptide: GDSL esterase/lipase At1g28670 (384 aa).

An N-terminal signal peptide occupies residues 1-24 (MASSLKKLISSFLLVLYSTTIIVA). Ser-42 functions as the Nucleophile in the catalytic mechanism. 3 N-linked (GlcNAc...) asparagine glycosylation sites follow: Asn-105, Asn-138, and Asn-321. Catalysis depends on residues Asp-346 and His-349.

It belongs to the 'GDSL' lipolytic enzyme family.

The protein localises to the secreted. In Arabidopsis thaliana (Mouse-ear cress), this protein is GDSL esterase/lipase At1g28670.